The primary structure comprises 396 residues: Putative cytochrome P450 YjiB (396 aa).

Residue C349 coordinates heme.

Belongs to the cytochrome P450 family. It depends on heme as a cofactor.

In Bacillus subtilis (strain 168), this protein is Putative cytochrome P450 YjiB (yjiB).